The primary structure comprises 92 residues: Acylphosphatase (92 aa).

Residues 3 to 92 form the Acylphosphatase-like domain; the sequence is TKHVLVSGIV…GPRSTHFEVT (90 aa). Active-site residues include Arg-18 and Asn-36.

The protein belongs to the acylphosphatase family.

It catalyses the reaction an acyl phosphate + H2O = a carboxylate + phosphate + H(+). This Alcanivorax borkumensis (strain ATCC 700651 / DSM 11573 / NCIMB 13689 / SK2) protein is Acylphosphatase (acyP).